The sequence spans 603 residues: Polypeptide N-acetylgalactosaminyltransferase 10 (603 aa).

Topologically, residues 1–11 (MRRKEKRLLQA) are cytoplasmic. Residues 12 to 31 (VALALAALVLLPNVGLWALY) form a helical; Signal-anchor for type II membrane protein membrane-spanning segment. At 32-603 (RERQPDGSPG…STVLENFNRN (572 aa)) the chain is on the lumenal side. N-linked (GlcNAc...) asparagine glycosylation is found at asparagine 124 and asparagine 146. 5 disulfide bridges follow: cysteine 135/cysteine 365, cysteine 356/cysteine 432, cysteine 471/cysteine 488, cysteine 523/cysteine 538, and cysteine 563/cysteine 578. The interval 144 to 253 (LPNTSIIIPF…VNWLPPLLDR (110 aa)) is catalytic subdomain A. Residues aspartate 185 and arginine 214 each coordinate substrate. Aspartate 237 is a Mn(2+) binding site. Serine 238 serves as a coordination point for substrate. Histidine 239 provides a ligand contact to Mn(2+). Residues 311–373 (PFESPVMAGG…PCSRVGHIYR (63 aa)) form a catalytic subdomain B region. Position 342 (tryptophan 342) interacts with substrate. Position 370 (histidine 370) interacts with Mn(2+). Substrate-binding residues include arginine 373 and tyrosine 378. The flexible loop stretch occupies residues 373-384 (RKYVPYKVPAGV). A Ricin B-type lectin domain is found at 458–590 (AAWGEIRNVG…SSLTQQWLFE (133 aa)). N-linked (GlcNAc...) asparagine glycosylation is present at asparagine 593.

The protein belongs to the glycosyltransferase 2 family. GalNAc-T subfamily. The cofactor is Mn(2+). As to expression, highly expressed in the sublingual gland, testis, small intestine, colon and ovary. Expressed at intermediate level in heart, brain, spleen, lung, stomach, cervix and uterus.

Its subcellular location is the golgi apparatus membrane. The catalysed reaction is L-seryl-[protein] + UDP-N-acetyl-alpha-D-galactosamine = a 3-O-[N-acetyl-alpha-D-galactosaminyl]-L-seryl-[protein] + UDP + H(+). The enzyme catalyses L-threonyl-[protein] + UDP-N-acetyl-alpha-D-galactosamine = a 3-O-[N-acetyl-alpha-D-galactosaminyl]-L-threonyl-[protein] + UDP + H(+). The protein operates within protein modification; protein glycosylation. In terms of biological role, catalyzes the initial reaction in O-linked oligosaccharide biosynthesis, the transfer of an N-acetyl-D-galactosamine residue to a serine or threonine residue on the protein receptor. Has activity toward Muc5Ac and EA2 peptide substrates. This is Polypeptide N-acetylgalactosaminyltransferase 10 (Galnt10) from Rattus norvegicus (Rat).